A 314-amino-acid chain; its full sequence is Methionyl-tRNA formyltransferase (314 aa).

113 to 116 (SLLP) provides a ligand contact to (6S)-5,6,7,8-tetrahydrofolate.

Belongs to the Fmt family.

The catalysed reaction is L-methionyl-tRNA(fMet) + (6R)-10-formyltetrahydrofolate = N-formyl-L-methionyl-tRNA(fMet) + (6S)-5,6,7,8-tetrahydrofolate + H(+). Functionally, attaches a formyl group to the free amino group of methionyl-tRNA(fMet). The formyl group appears to play a dual role in the initiator identity of N-formylmethionyl-tRNA by promoting its recognition by IF2 and preventing the misappropriation of this tRNA by the elongation apparatus. The chain is Methionyl-tRNA formyltransferase from Pseudomonas aeruginosa (strain LESB58).